The primary structure comprises 94 residues: Pyrimidine/purine nucleoside phosphorylase (94 aa).

Belongs to the nucleoside phosphorylase PpnP family.

It catalyses the reaction a purine D-ribonucleoside + phosphate = a purine nucleobase + alpha-D-ribose 1-phosphate. It carries out the reaction adenosine + phosphate = alpha-D-ribose 1-phosphate + adenine. The enzyme catalyses cytidine + phosphate = cytosine + alpha-D-ribose 1-phosphate. The catalysed reaction is guanosine + phosphate = alpha-D-ribose 1-phosphate + guanine. It catalyses the reaction inosine + phosphate = alpha-D-ribose 1-phosphate + hypoxanthine. It carries out the reaction thymidine + phosphate = 2-deoxy-alpha-D-ribose 1-phosphate + thymine. The enzyme catalyses uridine + phosphate = alpha-D-ribose 1-phosphate + uracil. The catalysed reaction is xanthosine + phosphate = alpha-D-ribose 1-phosphate + xanthine. In terms of biological role, catalyzes the phosphorolysis of diverse nucleosides, yielding D-ribose 1-phosphate and the respective free bases. Can use uridine, adenosine, guanosine, cytidine, thymidine, inosine and xanthosine as substrates. Also catalyzes the reverse reactions. This chain is Pyrimidine/purine nucleoside phosphorylase, found in Pseudomonas putida (strain ATCC 700007 / DSM 6899 / JCM 31910 / BCRC 17059 / LMG 24140 / F1).